Consider the following 206-residue polypeptide: Pyridoxine/pyridoxamine 5'-phosphate oxidase (206 aa).

Residues 53-58 (RMVLLK), 68-69 (YT), lysine 75, and glutamine 97 contribute to the FMN site. A substrate-binding site is contributed by lysine 58. Residues tyrosine 115, arginine 119, and serine 123 each contribute to the substrate site. FMN is bound by residues 132–133 (QS) and tryptophan 177. Residue 183–185 (RLH) coordinates substrate. Arginine 187 provides a ligand contact to FMN.

The protein belongs to the pyridoxamine 5'-phosphate oxidase family. Homodimer. FMN is required as a cofactor.

The catalysed reaction is pyridoxamine 5'-phosphate + O2 + H2O = pyridoxal 5'-phosphate + H2O2 + NH4(+). It carries out the reaction pyridoxine 5'-phosphate + O2 = pyridoxal 5'-phosphate + H2O2. Its pathway is cofactor metabolism; pyridoxal 5'-phosphate salvage; pyridoxal 5'-phosphate from pyridoxamine 5'-phosphate: step 1/1. The protein operates within cofactor metabolism; pyridoxal 5'-phosphate salvage; pyridoxal 5'-phosphate from pyridoxine 5'-phosphate: step 1/1. Its function is as follows. Catalyzes the oxidation of either pyridoxine 5'-phosphate (PNP) or pyridoxamine 5'-phosphate (PMP) into pyridoxal 5'-phosphate (PLP). The sequence is that of Pyridoxine/pyridoxamine 5'-phosphate oxidase from Agrobacterium fabrum (strain C58 / ATCC 33970) (Agrobacterium tumefaciens (strain C58)).